A 200-amino-acid chain; its full sequence is Holliday junction branch migration complex subunit RuvA (200 aa).

The interval 1–64 (MITSIQGTLV…EDSQTLYGFA (64 aa)) is domain I. The segment at 65 to 144 (SPAERDFFRL…ATGAAPGLAT (80 aa)) is domain II. The interval 145–151 (QPAAAAS) is flexible linker. Residues 152-200 (PGASAHRDAVAALVALGYRSADADEAVRRASLALGEAATTESLIKKALS) are domain III.

Belongs to the RuvA family. As to quaternary structure, homotetramer. Forms an RuvA(8)-RuvB(12)-Holliday junction (HJ) complex. HJ DNA is sandwiched between 2 RuvA tetramers; dsDNA enters through RuvA and exits via RuvB. An RuvB hexamer assembles on each DNA strand where it exits the tetramer. Each RuvB hexamer is contacted by two RuvA subunits (via domain III) on 2 adjacent RuvB subunits; this complex drives branch migration. In the full resolvosome a probable DNA-RuvA(4)-RuvB(12)-RuvC(2) complex forms which resolves the HJ.

The protein resides in the cytoplasm. The RuvA-RuvB-RuvC complex processes Holliday junction (HJ) DNA during genetic recombination and DNA repair, while the RuvA-RuvB complex plays an important role in the rescue of blocked DNA replication forks via replication fork reversal (RFR). RuvA specifically binds to HJ cruciform DNA, conferring on it an open structure. The RuvB hexamer acts as an ATP-dependent pump, pulling dsDNA into and through the RuvAB complex. HJ branch migration allows RuvC to scan DNA until it finds its consensus sequence, where it cleaves and resolves the cruciform DNA. This is Holliday junction branch migration complex subunit RuvA from Opitutus terrae (strain DSM 11246 / JCM 15787 / PB90-1).